We begin with the raw amino-acid sequence, 66 residues long: MPKLKSHRGAAKRFRKTASGAIKRRGAYRNHILTKKSTKQKRHLRVEAGTLKPCDARLAERMLHGS.

Residues 1-44 (MPKLKSHRGAAKRFRKTASGAIKRRGAYRNHILTKKSTKQKRHL) show a composition bias toward basic residues. The tract at residues 1–48 (MPKLKSHRGAAKRFRKTASGAIKRRGAYRNHILTKKSTKQKRHLRVEA) is disordered.

Belongs to the bacterial ribosomal protein bL35 family.

The protein is Large ribosomal subunit protein bL35 of Legionella pneumophila (strain Corby).